A 338-amino-acid chain; its full sequence is 4-hydroxy-2-oxovalerate aldolase (338 aa).

In terms of domain architecture, Pyruvate carboxyltransferase spans 4–254 (PRLTDTTLRD…NPGLDVLALM (251 aa)). 12–13 (RD) lines the substrate pocket. Residue Asp13 participates in Mn(2+) binding. His16 functions as the Proton acceptor in the catalytic mechanism. Substrate is bound by residues Ser166 and His193. His193 and His195 together coordinate Mn(2+). Substrate is bound at residue Tyr284.

The protein belongs to the 4-hydroxy-2-oxovalerate aldolase family.

It catalyses the reaction (S)-4-hydroxy-2-oxopentanoate = acetaldehyde + pyruvate. In Roseiflexus sp. (strain RS-1), this protein is 4-hydroxy-2-oxovalerate aldolase.